A 490-amino-acid chain; its full sequence is Serine palmitoyltransferase 2 (490 aa).

A helical membrane pass occupies residues 10–30; that stretch reads VDDVGYLPILFLYIAYAFIIF. The residue at position 321 (K321) is an N6-(pyridoxal phosphate)lysine.

It belongs to the class-II pyridoxal-phosphate-dependent aminotransferase family. Forms a heterodimer with sptA. Pyridoxal 5'-phosphate serves as cofactor.

The protein resides in the endoplasmic reticulum membrane. It catalyses the reaction L-serine + hexadecanoyl-CoA + H(+) = 3-oxosphinganine + CO2 + CoA. Its pathway is lipid metabolism; sphingolipid metabolism. Functionally, catalytic subunit of serine palmitoyltransferase (SPT), which catalyzes the committed step in the synthesis of sphingolipids, the condensation of serine with palmitoyl CoA to form the long chain base 3-ketosphinganine. The protein is Serine palmitoyltransferase 2 (sptB) of Dictyostelium discoideum (Social amoeba).